A 2163-amino-acid chain; its full sequence is Myosin-VIIa (2163 aa).

Residues 58 to 728 (QGVEDMISLG…HDLFLEQERD (671 aa)) enclose the Myosin motor domain. Residue 151–158 (GESGAGKT) coordinates ATP. 2 actin-binding regions span residues 607–629 (LDSL…KPNE) and 707–721 (QLGH…AHDL). IQ domains are found at residues 731-753 (LTRK…RFLR), 754-783 (MRQA…GYMR), 800-822 (LRGH…EYGL), and 823-852 (KMWA…EYRR). A coiled-coil region spans residues 886–914 (RLNEIERKEIEQELEERRRVEVKKNIIND). Residues 937–958 (PDSSSEAPTPHGGRETSVFNDL) are disordered. The MyTH4 1 domain occupies 1003-1239 (YSRKPLKHPL…PSWLELQATK (237 aa)). In terms of domain architecture, FERM 1 spans 1244–1554 (IMLPITFMDG…YFLEGLKKRS (311 aa)). In terms of domain architecture, SH3 spans 1552–1621 (KRSKFVIALQ…PAEIVYVLPS (70 aa)). Residues 1697–1845 (YSREPLKQPL…PHQVEVEAIQ (149 aa)) form the MyTH4 2 domain. Residues 1851 to 2154 (IFHKVYFPDD…SYISLMLTNM (304 aa)) enclose the FERM 2 domain.

Belongs to the TRAFAC class myosin-kinesin ATPase superfamily. Myosin family. Homodimerizes in a two headed molecule through the formation of a coiled-coil rod.

The protein resides in the cytoplasm. Functionally, myosins are actin-based motor molecules with ATPase activity. Unconventional myosins serve in intracellular movements: can function in cells as a single-molecule cargo transporter. A very slow and high-duty-ratio motor, may be suitable for tension maintenance of actin filaments. Their highly divergent tails are presumed to bind to membranous compartments, which would be moved relative to actin filaments. Plays a key role in the formation of cellular projections and other actin-based functions required for embryonic and larval viability. Necessary for auditory transduction: plays a role in Johnston organ (JO) organization by functioning in scolopidial apical attachment and therefore to acoustic stimulus propagation from the antenna a2/a3 joint to transducing elements. This chain is Myosin-VIIa, found in Aedes aegypti (Yellowfever mosquito).